A 432-amino-acid chain; its full sequence is D-amino acid dehydrogenase (432 aa).

An FAD-binding site is contributed by 3–17 (VVVLGSGVVGVASAW).

Belongs to the DadA oxidoreductase family. FAD is required as a cofactor.

It carries out the reaction a D-alpha-amino acid + A + H2O = a 2-oxocarboxylate + AH2 + NH4(+). Its pathway is amino-acid degradation; D-alanine degradation; NH(3) and pyruvate from D-alanine: step 1/1. Oxidative deamination of D-amino acids. The chain is D-amino acid dehydrogenase from Cronobacter sakazakii (strain ATCC BAA-894) (Enterobacter sakazakii).